Consider the following 193-residue polypeptide: Intracellular heme transport protein HutX (193 aa).

Residue Tyr116 coordinates heme.

In terms of assembly, homodimer. Interacts with HutZ.

The protein resides in the cytoplasm. In terms of biological role, binds heme. Heme is transferred to the heme-degrading enzyme HutZ via a specific protein-protein interaction. This is Intracellular heme transport protein HutX from Vibrio cholerae serotype O1 (strain ATCC 39315 / El Tor Inaba N16961).